Consider the following 91-residue polypeptide: MANLKSSKKDIRRTARRKERNGEDRTELRTYARLLIKAIKSGDKTEALTVFSKLSSKLDRAAKTKLIHKKNADRKKSRMALRINSIEAKAA.

Positions 1-26 (MANLKSSKKDIRRTARRKERNGEDRT) are disordered.

Belongs to the bacterial ribosomal protein bS20 family.

Functionally, binds directly to 16S ribosomal RNA. The sequence is that of Small ribosomal subunit protein bS20 from Leptospira biflexa serovar Patoc (strain Patoc 1 / Ames).